Reading from the N-terminus, the 472-residue chain is WAS protein family homolog DDB_G0292878 (472 aa).

Positions 279 to 472 (LPTYDNSNSG…ESDTDSSEWE (194 aa)) are disordered. Positions 282–299 (YDNSNSGSAPVNQSSGGD) are enriched in polar residues. A compositionally biased stretch (low complexity) spans 300-314 (NNVNNNNNNNNSNNS). The span at 320 to 356 (PPQPTNAPPPPPPPPQSANAPPPPPPPPVSAPPPFNP) shows a compositional bias: pro residues. Acidic residues predominate over residues 363-373 (NDDDDDDDDDN). Residues 374–383 (GGGGGPGGAI) show a composition bias toward gly residues. The 20-residue stretch at 382 to 401 (AIGDLLADIRRGHKNRLKKA) folds into the WH2 domain. Residues 457-472 (TDDQDGESDTDSSEWE) show a composition bias toward acidic residues.

This sequence belongs to the WASH1 family.

Its function is as follows. Acts as a nucleation-promoting factor by activating the Arp2/3 complex to induce actin polymerization. The sequence is that of WAS protein family homolog DDB_G0292878 from Dictyostelium discoideum (Social amoeba).